Reading from the N-terminus, the 267-residue chain is V-type proton ATPase subunit D (267 aa).

It belongs to the V-ATPase D subunit family. As to quaternary structure, V-ATPase is a heteromultimeric enzyme composed of a peripheral catalytic V1 complex (components A to H) attached to an integral membrane V0 proton pore complex (components: a, c, c', c'', d, e, f and VOA1).

The protein localises to the vacuole membrane. Subunit of the V1 complex of vacuolar(H+)-ATPase (V-ATPase), a multisubunit enzyme composed of a peripheral complex (V1) that hydrolyzes ATP and a membrane integral complex (V0) that translocates protons. V-ATPase is responsible for acidifying and maintaining the pH of intracellular compartments. The protein is V-type proton ATPase subunit D (VMA8) of Candida albicans (strain SC5314 / ATCC MYA-2876) (Yeast).